The sequence spans 249 residues: DNA repair protein RecO (249 aa).

It belongs to the RecO family.

Functionally, involved in DNA repair and RecF pathway recombination. The polypeptide is DNA repair protein RecO (Lactobacillus delbrueckii subsp. bulgaricus (strain ATCC BAA-365 / Lb-18)).